Consider the following 449-residue polypeptide: Glucose-6-phosphate isomerase (449 aa).

E291 serves as the catalytic Proton donor. Catalysis depends on residues H312 and K426.

This sequence belongs to the GPI family.

It localises to the cytoplasm. The catalysed reaction is alpha-D-glucose 6-phosphate = beta-D-fructose 6-phosphate. The protein operates within carbohydrate biosynthesis; gluconeogenesis. Its pathway is carbohydrate degradation; glycolysis; D-glyceraldehyde 3-phosphate and glycerone phosphate from D-glucose: step 2/4. Its function is as follows. Catalyzes the reversible isomerization of glucose-6-phosphate to fructose-6-phosphate. The chain is Glucose-6-phosphate isomerase from Streptococcus thermophilus (strain CNRZ 1066).